The sequence spans 170 residues: Phosphopantetheine adenylyltransferase (170 aa).

Substrate is bound at residue S14. ATP contacts are provided by residues 14-15 and H22; that span reads SF. Residues K46, L79, and R93 each contribute to the substrate site. ATP is bound by residues 94–96, E104, and 129–135; these read GIR and IAEVSST.

Belongs to the bacterial CoaD family. As to quaternary structure, homohexamer. It depends on Mg(2+) as a cofactor.

Its subcellular location is the cytoplasm. The catalysed reaction is (R)-4'-phosphopantetheine + ATP + H(+) = 3'-dephospho-CoA + diphosphate. It participates in cofactor biosynthesis; coenzyme A biosynthesis; CoA from (R)-pantothenate: step 4/5. Its function is as follows. Reversibly transfers an adenylyl group from ATP to 4'-phosphopantetheine, yielding dephospho-CoA (dPCoA) and pyrophosphate. The polypeptide is Phosphopantetheine adenylyltransferase (Neisseria meningitidis serogroup C (strain 053442)).